Reading from the N-terminus, the 352-residue chain is Glycerol-1-phosphate dehydrogenase [NAD(P)+] (352 aa).

NAD(+) contacts are provided by residues 99–103 (GAKID) and 121–124 (TAPS). Substrate is bound at residue Asp-126. Residue Ser-130 coordinates NAD(+). Substrate is bound at residue Asp-173. Asp-173 and His-253 together coordinate Zn(2+). Residue His-257 participates in substrate binding. Zn(2+) is bound at residue His-269.

Belongs to the glycerol-1-phosphate dehydrogenase family. It depends on Zn(2+) as a cofactor.

It is found in the cytoplasm. It catalyses the reaction sn-glycerol 1-phosphate + NAD(+) = dihydroxyacetone phosphate + NADH + H(+). It carries out the reaction sn-glycerol 1-phosphate + NADP(+) = dihydroxyacetone phosphate + NADPH + H(+). The protein operates within membrane lipid metabolism; glycerophospholipid metabolism. In terms of biological role, catalyzes the NAD(P)H-dependent reduction of dihydroxyacetonephosphate (DHAP or glycerone phosphate) to glycerol 1-phosphate (G1P). The G1P thus generated is used as the glycerophosphate backbone of phospholipids in the cellular membranes of Archaea. In Thermoplasma acidophilum (strain ATCC 25905 / DSM 1728 / JCM 9062 / NBRC 15155 / AMRC-C165), this protein is Glycerol-1-phosphate dehydrogenase [NAD(P)+].